The sequence spans 432 residues: Serine--tRNA ligase (432 aa).

L-serine is bound at residue 235–237; the sequence is TSE. 266 to 268 is a binding site for ATP; the sequence is RSE. Glu-289 provides a ligand contact to L-serine. Residue 353-356 coordinates ATP; it reads EISS. Ser-388 contacts L-serine.

The protein belongs to the class-II aminoacyl-tRNA synthetase family. Type-1 seryl-tRNA synthetase subfamily. As to quaternary structure, homodimer. The tRNA molecule binds across the dimer.

The protein resides in the cytoplasm. The catalysed reaction is tRNA(Ser) + L-serine + ATP = L-seryl-tRNA(Ser) + AMP + diphosphate + H(+). The enzyme catalyses tRNA(Sec) + L-serine + ATP = L-seryl-tRNA(Sec) + AMP + diphosphate + H(+). It participates in aminoacyl-tRNA biosynthesis; selenocysteinyl-tRNA(Sec) biosynthesis; L-seryl-tRNA(Sec) from L-serine and tRNA(Sec): step 1/1. Functionally, catalyzes the attachment of serine to tRNA(Ser). Is also able to aminoacylate tRNA(Sec) with serine, to form the misacylated tRNA L-seryl-tRNA(Sec), which will be further converted into selenocysteinyl-tRNA(Sec). The chain is Serine--tRNA ligase from Paraburkholderia phymatum (strain DSM 17167 / CIP 108236 / LMG 21445 / STM815) (Burkholderia phymatum).